The following is a 447-amino-acid chain: Tubulin beta chain (447 aa).

Positions 11, 69, 138, 142, 143, 144, 204, and 226 each coordinate GTP. A Mg(2+)-binding site is contributed by glutamate 69.

The protein belongs to the tubulin family. In terms of assembly, dimer of alpha and beta chains. A typical microtubule is a hollow water-filled tube with an outer diameter of 25 nm and an inner diameter of 15 nM. Alpha-beta heterodimers associate head-to-tail to form protofilaments running lengthwise along the microtubule wall with the beta-tubulin subunit facing the microtubule plus end conferring a structural polarity. Microtubules usually have 13 protofilaments but different protofilament numbers can be found in some organisms and specialized cells. Requires Mg(2+) as cofactor.

It is found in the cytoplasm. The protein resides in the cytoskeleton. Functionally, tubulin is the major constituent of microtubules, a cylinder consisting of laterally associated linear protofilaments composed of alpha- and beta-tubulin heterodimers. Microtubules grow by the addition of GTP-tubulin dimers to the microtubule end, where a stabilizing cap forms. Below the cap, tubulin dimers are in GDP-bound state, owing to GTPase activity of alpha-tubulin. The polypeptide is Tubulin beta chain (Trichophyton rubrum (Athlete's foot fungus)).